The primary structure comprises 952 residues: Leucine--tRNA ligase (952 aa).

The 'HIGH' region motif lies at 66–77 (PYPSGAGLHVGH). The 'KMSKS' region motif lies at 722 to 726 (KMGKS). Residue Lys-725 participates in ATP binding.

It belongs to the class-I aminoacyl-tRNA synthetase family.

The protein resides in the cytoplasm. It carries out the reaction tRNA(Leu) + L-leucine + ATP = L-leucyl-tRNA(Leu) + AMP + diphosphate. The protein is Leucine--tRNA ligase of Corynebacterium glutamicum (strain ATCC 13032 / DSM 20300 / JCM 1318 / BCRC 11384 / CCUG 27702 / LMG 3730 / NBRC 12168 / NCIMB 10025 / NRRL B-2784 / 534).